The sequence spans 859 residues: Kinesin-like protein KIN-14T (859 aa).

Residues 91–411 form the Kinesin motor domain; it reads NIRVFCRVKP…LNFATRAKNI (321 aa). An ATP-binding site is contributed by 168–175; it reads GQTGTGKT. Residues 422–463 are a coiled coil; that stretch reads QAKKEAVMMNLQKMMEKIEQEREMSLRKMRNLNETLEKLTGK. Residues 511–530 form a disordered region; sequence LSGADFSVTPNSSSFKSRRN. Positions 518 to 530 are enriched in polar residues; it reads VTPNSSSFKSRRN.

This sequence belongs to the TRAFAC class myosin-kinesin ATPase superfamily. Kinesin family. KIN-14 subfamily.

The polypeptide is Kinesin-like protein KIN-14T (Arabidopsis thaliana (Mouse-ear cress)).